The sequence spans 447 residues: Signal recognition particle protein (447 aa).

GTP is bound by residues 108-115 (GLQGSGKT), 190-194 (DTAGR), and 248-251 (TKLD).

Belongs to the GTP-binding SRP family. SRP54 subfamily. In terms of assembly, part of the signal recognition particle protein translocation system, which is composed of SRP and FtsY. Interacts with RNA.

The protein localises to the cytoplasm. It carries out the reaction GTP + H2O = GDP + phosphate + H(+). In terms of biological role, involved in targeting and insertion of nascent membrane proteins into the cytoplasmic membrane. Binds to the hydrophobic signal sequence of the ribosome-nascent chain (RNC) as it emerges from the ribosomes. The SRP-RNC complex is then targeted to the cytoplasmic membrane where it interacts with the SRP receptor FtsY. The protein is Signal recognition particle protein of Mycoplasma mycoides.